Here is a 943-residue protein sequence, read N- to C-terminus: Protein translocase subunit SecA (943 aa).

ATP contacts are provided by residues Q77, 95–99 (GEGKT), and D484.

The protein belongs to the SecA family. As to quaternary structure, monomer and homodimer. Part of the essential Sec protein translocation apparatus which comprises SecA, SecYEG and auxiliary proteins SecDF. Other proteins may also be involved.

The protein localises to the cell membrane. Its subcellular location is the cytoplasm. It catalyses the reaction ATP + H2O + cellular proteinSide 1 = ADP + phosphate + cellular proteinSide 2.. Functionally, part of the Sec protein translocase complex. Interacts with the SecYEG preprotein conducting channel. Has a central role in coupling the hydrolysis of ATP to the transfer of proteins into and across the cell membrane, serving as an ATP-driven molecular motor driving the stepwise translocation of polypeptide chains across the membrane. In Mesoplasma florum (strain ATCC 33453 / NBRC 100688 / NCTC 11704 / L1) (Acholeplasma florum), this protein is Protein translocase subunit SecA.